We begin with the raw amino-acid sequence, 231 residues long: Response regulator MprA (231 aa).

The Response regulatory domain occupies 4 to 118; that stretch reads RILVVDDDRA…ELLARMRALL (115 aa). Position 48 is a 4-aspartylphosphate (Asp-48). Residues 130–228 constitute a DNA-binding region (ompR/PhoB-type); sequence SAAMTFSDLS…VRGVGYVLRE (99 aa).

Phosphorylated and dephosphorylated by MprB.

It localises to the cytoplasm. In terms of biological role, member of the two-component regulatory system MprB/MprA which contributes to maintaining a balance among several systems involved in stress resistance and is required for establishment and maintenance of persistent infection in the host. Functions as a transcriptional regulator that recognizes a 19-bp nucleotide motif comprizing two loosely conserved 8-bp direct DNA-binding motif repeats separated by a 3-bp spacer region. This is Response regulator MprA (mprA) from Mycolicibacterium vanbaalenii (strain DSM 7251 / JCM 13017 / BCRC 16820 / KCTC 9966 / NRRL B-24157 / PYR-1) (Mycobacterium vanbaalenii).